The following is a 942-amino-acid chain: Leucine--tRNA ligase 1 (942 aa).

The short motif at 39 to 49 (PYTNSPLHIGH) is the 'HIGH' region element. Residues 624 to 628 (KMSKS) carry the 'KMSKS' region motif. Position 627 (K627) interacts with ATP.

The protein belongs to the class-I aminoacyl-tRNA synthetase family.

The protein resides in the cytoplasm. The enzyme catalyses tRNA(Leu) + L-leucine + ATP = L-leucyl-tRNA(Leu) + AMP + diphosphate. This chain is Leucine--tRNA ligase 1, found in Sulfolobus acidocaldarius (strain ATCC 33909 / DSM 639 / JCM 8929 / NBRC 15157 / NCIMB 11770).